Here is a 342-residue protein sequence, read N- to C-terminus: S-adenosylmethionine:tRNA ribosyltransferase-isomerase (342 aa).

The protein belongs to the QueA family. As to quaternary structure, monomer.

Its subcellular location is the cytoplasm. It catalyses the reaction 7-aminomethyl-7-carbaguanosine(34) in tRNA + S-adenosyl-L-methionine = epoxyqueuosine(34) in tRNA + adenine + L-methionine + 2 H(+). It participates in tRNA modification; tRNA-queuosine biosynthesis. In terms of biological role, transfers and isomerizes the ribose moiety from AdoMet to the 7-aminomethyl group of 7-deazaguanine (preQ1-tRNA) to give epoxyqueuosine (oQ-tRNA). In Bacillus pumilus (strain SAFR-032), this protein is S-adenosylmethionine:tRNA ribosyltransferase-isomerase.